Reading from the N-terminus, the 188-residue chain is Phosphoribosylglycinamide formyltransferase (188 aa).

Residue 12 to 14 participates in N(1)-(5-phospho-beta-D-ribosyl)glycinamide binding; it reads GSN. Residues Lys-66, 91–94, and Asn-108 contribute to the (6R)-10-formyltetrahydrofolate site; that span reads MRLI. His-110 acts as the Proton donor in catalysis.

The protein belongs to the GART family.

It carries out the reaction N(1)-(5-phospho-beta-D-ribosyl)glycinamide + (6R)-10-formyltetrahydrofolate = N(2)-formyl-N(1)-(5-phospho-beta-D-ribosyl)glycinamide + (6S)-5,6,7,8-tetrahydrofolate + H(+). Its pathway is purine metabolism; IMP biosynthesis via de novo pathway; N(2)-formyl-N(1)-(5-phospho-D-ribosyl)glycinamide from N(1)-(5-phospho-D-ribosyl)glycinamide (10-formyl THF route): step 1/1. Its function is as follows. Catalyzes the transfer of a formyl group from 10-formyltetrahydrofolate to 5-phospho-ribosyl-glycinamide (GAR), producing 5-phospho-ribosyl-N-formylglycinamide (FGAR) and tetrahydrofolate. This Staphylococcus aureus (strain MRSA252) protein is Phosphoribosylglycinamide formyltransferase.